The primary structure comprises 280 residues: 4-diphosphocytidyl-2-C-methyl-D-erythritol kinase (280 aa).

Residue lysine 9 is part of the active site. Position 93–103 (93–103) interacts with ATP; that stretch reads PVAAGLGGGSS. Residue aspartate 135 is part of the active site.

It belongs to the GHMP kinase family. IspE subfamily.

The enzyme catalyses 4-CDP-2-C-methyl-D-erythritol + ATP = 4-CDP-2-C-methyl-D-erythritol 2-phosphate + ADP + H(+). It functions in the pathway isoprenoid biosynthesis; isopentenyl diphosphate biosynthesis via DXP pathway; isopentenyl diphosphate from 1-deoxy-D-xylulose 5-phosphate: step 3/6. Its function is as follows. Catalyzes the phosphorylation of the position 2 hydroxy group of 4-diphosphocytidyl-2C-methyl-D-erythritol. The polypeptide is 4-diphosphocytidyl-2-C-methyl-D-erythritol kinase (Syntrophotalea carbinolica (strain DSM 2380 / NBRC 103641 / GraBd1) (Pelobacter carbinolicus)).